The chain runs to 107 residues: Pro-corazonin (107 aa).

Residues 1 to 21 (MVNSQILILFILSLTITIVMC) form the signal peptide. Gln22 bears the Pyrrolidone carboxylic acid mark. Asparagine amide is present on Asn32. Residues 88-107 (SFSENMINDHRQPAPTNNNY) constitute a propeptide that is removed on maturation.

It belongs to the corazonin family. In the adult brain, expressed in four neurons of the lateral protocerebrum project axons towards the retrocerebral complex.

It is found in the secreted. In terms of biological role, cardioactive peptide. Corazonin is probably involved in the physiological regulation of the heart beat. In Apis mellifera (Honeybee), this protein is Pro-corazonin.